A 390-amino-acid chain; its full sequence is LL-diaminopimelate aminotransferase (390 aa).

Residues Y13, G38, K102, Y126, and N176 each contribute to the substrate site. Pyridoxal 5'-phosphate is bound by residues 101 to 102, Y126, N176, Y207, and 235 to 237; these read SK and SVS. K238 carries the post-translational modification N6-(pyridoxal phosphate)lysine. R246 is a pyridoxal 5'-phosphate binding site. R364 is a substrate binding site.

Belongs to the class-I pyridoxal-phosphate-dependent aminotransferase family. LL-diaminopimelate aminotransferase subfamily. Homodimer. It depends on pyridoxal 5'-phosphate as a cofactor.

The enzyme catalyses (2S,6S)-2,6-diaminopimelate + 2-oxoglutarate = (S)-2,3,4,5-tetrahydrodipicolinate + L-glutamate + H2O + H(+). It functions in the pathway amino-acid biosynthesis; L-lysine biosynthesis via DAP pathway; LL-2,6-diaminopimelate from (S)-tetrahydrodipicolinate (aminotransferase route): step 1/1. Functionally, involved in the synthesis of meso-diaminopimelate (m-DAP or DL-DAP), required for both lysine and peptidoglycan biosynthesis. Catalyzes the direct conversion of tetrahydrodipicolinate to LL-diaminopimelate. Is also able to catalyze the reverse reaction in vitro, i.e. the transamination of LL-diaminopimelate with 2-oxoglutarate to produce tetrahydrodipicolinate and glutamate. Can also use m-DAP instead of LL-DAP as the amino-group donor, and oxaloacetate instead of 2-oxoglutarate as the amino-group acceptor. This chain is LL-diaminopimelate aminotransferase, found in Moorella thermoacetica (strain ATCC 39073 / JCM 9320).